A 526-amino-acid polypeptide reads, in one-letter code: Peptide chain release factor 3 (526 aa).

Residues 9–277 form the tr-type G domain; sequence DKRRTFAIIS…GIVEWAPKPL (269 aa). GTP is bound by residues 18–25, 86–90, and 140–143; these read SHPDAGKT, DTPGH, and NKCD.

Belongs to the TRAFAC class translation factor GTPase superfamily. Classic translation factor GTPase family. PrfC subfamily.

The protein localises to the cytoplasm. Its function is as follows. Increases the formation of ribosomal termination complexes and stimulates activities of RF-1 and RF-2. It binds guanine nucleotides and has strong preference for UGA stop codons. It may interact directly with the ribosome. The stimulation of RF-1 and RF-2 is significantly reduced by GTP and GDP, but not by GMP. The polypeptide is Peptide chain release factor 3 (Shewanella frigidimarina (strain NCIMB 400)).